Reading from the N-terminus, the 428-residue chain is MRYTKSEEAMKVAETLMPGGVNSPVRAFKSVDTPAIFMDHGKGSKIYDIDGNEYIDYVLSWGPLILGHRDPQVISHLHEAIDKGTSFGASTLLENKLAQLVIDRVPSIEKVRMVSSGTEATLDTLRLARGYTGRNKIVKFEGCYHGHSDSLLIKAGSGVATLGLPDSPGVPEGIAKNTITVPYNDLDALKIAFEKFGDDIAGVIVEPVAGNMGVIPPIEGFLQGLRDITTEYGALLIFDEVMTGFRVGYHCAQGYFGVTPDLTCLGKVIGGGLPVGAFGGKKEIMDQIAPLGNIYQAGTLSGNPLAMTSGYETLSQLAPETYEYFNMLGDILEDGLKRVFAKHNVPITVNRAGSMIGYFLNEGPVTNFEQANKSDLKLFAEMYREMAKEGVFLPPSQFEGTFLSTAHTKEDIEKTIQAFDTALSRIVK.

Lys-267 is modified (N6-(pyridoxal phosphate)lysine).

The protein belongs to the class-III pyridoxal-phosphate-dependent aminotransferase family. HemL subfamily. Homodimer. Pyridoxal 5'-phosphate serves as cofactor.

The protein localises to the cytoplasm. The enzyme catalyses (S)-4-amino-5-oxopentanoate = 5-aminolevulinate. It participates in porphyrin-containing compound metabolism; protoporphyrin-IX biosynthesis; 5-aminolevulinate from L-glutamyl-tRNA(Glu): step 2/2. This Staphylococcus aureus (strain bovine RF122 / ET3-1) protein is Glutamate-1-semialdehyde 2,1-aminomutase 1.